A 273-amino-acid polypeptide reads, in one-letter code: Pyridoxal phosphate homeostasis protein (273 aa).

S6 is modified (phosphoserine). N6-(pyridoxal phosphate)lysine is present on K47. At Y69 the chain carries Phosphotyrosine. Residue K125 is modified to N6-succinyllysine. Phosphoserine occurs at positions 226 and 244. Positions 251–260 (DYSKKTDKPA) are enriched in basic and acidic residues. The interval 251 to 273 (DYSKKTDKPAAELQAPEEVAQAH) is disordered.

This sequence belongs to the pyridoxal phosphate-binding protein YggS/PROSC family.

Pyridoxal 5'-phosphate (PLP)-binding protein, which may be involved in intracellular homeostatic regulation of pyridoxal 5'-phosphate (PLP), the active form of vitamin B6. In Bos taurus (Bovine), this protein is Pyridoxal phosphate homeostasis protein.